Consider the following 587-residue polypeptide: NADH-quinone oxidoreductase subunit C/D (587 aa).

The segment at Met1 to Gln178 is NADH dehydrogenase I subunit C. An NADH dehydrogenase I subunit D region spans residues Asp202–Arg587.

The protein in the N-terminal section; belongs to the complex I 30 kDa subunit family. This sequence in the C-terminal section; belongs to the complex I 49 kDa subunit family. As to quaternary structure, NDH-1 is composed of 13 different subunits. Subunits NuoB, CD, E, F, and G constitute the peripheral sector of the complex.

The protein resides in the cell inner membrane. It carries out the reaction a quinone + NADH + 5 H(+)(in) = a quinol + NAD(+) + 4 H(+)(out). NDH-1 shuttles electrons from NADH, via FMN and iron-sulfur (Fe-S) centers, to quinones in the respiratory chain. The immediate electron acceptor for the enzyme in this species is believed to be ubiquinone. Couples the redox reaction to proton translocation (for every two electrons transferred, four hydrogen ions are translocated across the cytoplasmic membrane), and thus conserves the redox energy in a proton gradient. This Methylococcus capsulatus (strain ATCC 33009 / NCIMB 11132 / Bath) protein is NADH-quinone oxidoreductase subunit C/D.